A 108-amino-acid chain; its full sequence is MNKARKTYVLKLYVAGNTPNSVRALKTLKNILEQEFQGIYALKVIDVLKNPQLAEEDKILATPTLSKILPPPVRKIIGDLSDRERVLIGLDLLYEELTEEDWEAQSNL.

The protein belongs to the KaiB family. As to quaternary structure, homodimer, interacts with KaiC. The KaiABC complex composition changes during the circadian cycle to control KaiC phosphorylation. Complexes KaiC(6), KaiA(2-4):KaiC(6), KaiB(6):KaiC(6) and KaiC(6):KaiB(6):KaiA(12) are among the most important forms, many form cooperatively. Undergoes a major conformational rearrangment; in the free state forms homotetramers as a dimer of dimers. When bound to the CI domain of KaiC switches to a monomeric thioredoxin-fold (KaiB(fs)). KaiB(fs) binds CikA, leading it to dephosphorylate phospho-RpaA.

Its function is as follows. Key component of the KaiABC oscillator complex, which constitutes the main circadian regulator in cyanobacteria. Complex composition changes during the circadian cycle to control KaiC phosphorylation. KaiA stimulates KaiC autophosphorylation, while KaiB sequesters KaiA, leading to KaiC autodephosphorylation. Phospho-Ser-431 KaiC accumulation triggers binding of KaiB to form the KaiB(6):KaiC(6) complex, leading to changes in output regulators CikA and SasA. KaiB switches to a thioredoxin-like fold (KaiB(fs)) when bound to KaiC. KaiB(6):KaiC(6) formation exposes a site for KaiA binding that sequesters KaiA from KaiC, making the KaiC(6):KaiB(6):KaiA(12) complex that results in KaiC autodephosphorylation. A metamorphic protein which reversibly switches between an inactive tetrameric fold and a rare, thioredoxin-like monomeric fold (KaiB(fs)). KaiB(fs) binds phospho-KaiC, KaiA and CikA. KaiA and CikA compete for binding to KaiB(fs), and KaiB(fs) and SasA compete for binding to KaiC, thus the clock oscillator and output signal pathway are tightly coupled. In Nostoc sp. (strain PCC 7120 / SAG 25.82 / UTEX 2576), this protein is Circadian clock oscillator protein KaiB.